Consider the following 228-residue polypeptide: Thymidine kinase (228 aa).

ATP is bound at residue 23–30 (GNIGCGKS). Catalysis depends on Glu50, which acts as the Proton acceptor. The substrate site is built by Tyr68, Gln79, and Phe109. Arg157 is an ATP binding site.

Belongs to the DCK/DGK family.

The catalysed reaction is thymidine + ATP = dTMP + ADP + H(+). This chain is Thymidine kinase (TK), found in Ictaluridae (bullhead catfishes).